Here is a 428-residue protein sequence, read N- to C-terminus: Cyclic AMP-responsive element-binding protein 3-like protein 4 (428 aa).

The tract at residues 1-68 (MLLGSLFEQT…EFLQMMINPN (68 aa)) is required for transcriptional activation. Topologically, residues 1–294 (MLLGSLFEQT…QTSNKAAQTS (294 aa)) are cytoplasmic. Residues 71–111 (YSTGPAAAESPESDSGFSDDPRPDTPPQSETSPPLPQPTPV) are disordered. In terms of domain architecture, bZIP spans 216 to 279 (ILKKVRRKIR…ISLITQLRKL (64 aa)). Residues 218 to 247 (KKVRRKIRNKQSAQDSRRRKKEYIDGLESR) form a basic motif region. Residues 258–279 (LHKKVVELEKHNISLITQLRKL) form a leucine-zipper region. The helical; Signal-anchor for type II membrane protein transmembrane segment at 295-315 (TCVLILLFSLALLVFPSYSPF) threads the bilayer. Residues 316–428 (RSRPSASQED…LSKTARADEM (113 aa)) are Lumenal-facing. The disordered stretch occupies residues 339–428 (NKGGFSEVAD…LSKTARADEM (90 aa)). Over residues 354–368 (TLHRAQQREEGDPGR) the composition is skewed to basic and acidic residues. N-linked (GlcNAc...) asparagine glycosylation occurs at N418.

Belongs to the bZIP family. ATF subfamily. Binds DNA as a dimer. In terms of processing, controlled by regulated intramembrane proteolysis (RIP). A fragment containing the cytoplasmic transcription factor domain is released by proteolysis. The cleavage seems to be performed sequentially by site-1 and site-2 proteases (PS1 and PS2).

Its subcellular location is the endoplasmic reticulum membrane. The protein localises to the nucleus. Its function is as follows. Transcriptional activator. This chain is Cyclic AMP-responsive element-binding protein 3-like protein 4 (creb3l4), found in Xenopus tropicalis (Western clawed frog).